Here is a 351-residue protein sequence, read N- to C-terminus: Phosphoribosylformylglycinamidine cyclo-ligase (351 aa).

It belongs to the AIR synthase family.

The protein localises to the cytoplasm. The catalysed reaction is 2-formamido-N(1)-(5-O-phospho-beta-D-ribosyl)acetamidine + ATP = 5-amino-1-(5-phospho-beta-D-ribosyl)imidazole + ADP + phosphate + H(+). The protein operates within purine metabolism; IMP biosynthesis via de novo pathway; 5-amino-1-(5-phospho-D-ribosyl)imidazole from N(2)-formyl-N(1)-(5-phospho-D-ribosyl)glycinamide: step 2/2. This Burkholderia cenocepacia (strain HI2424) protein is Phosphoribosylformylglycinamidine cyclo-ligase.